The chain runs to 22 residues: Heliocin (22 aa).

Q1 is modified (pyrrolidone carboxylic acid). Positions 1-22 (QRFIHPTYRPPPQPRRPVIMRA) are disordered. O-linked (GalNAc...) threonine glycosylation is present at T7.

In terms of assembly, monomer. As to expression, hemolymph.

It is found in the secreted. Has antibacterial activity, preferentially against Gram-negative bacteria. In Heliothis virescens (Tobacco budworm moth), this protein is Heliocin.